A 215-amino-acid chain; its full sequence is Thiamine import ATP-binding protein ThiQ (215 aa).

The ABC transporter domain occupies 2-215; the sequence is IYLNNVILND…GQISQLQKGV (214 aa). An ATP-binding site is contributed by 32 to 39; that stretch reads GESGAGKS.

The protein belongs to the ABC transporter superfamily. Thiamine importer (TC 3.A.1.19.1) family. In terms of assembly, the complex is composed of two ATP-binding proteins (ThiQ), two transmembrane proteins (ThiP) and a solute-binding protein (ThiB).

It localises to the cell inner membrane. The enzyme catalyses thiamine(out) + ATP + H2O = thiamine(in) + ADP + phosphate + H(+). Its function is as follows. Part of the ABC transporter complex ThiBPQ involved in thiamine import. Responsible for energy coupling to the transport system. In Haemophilus influenzae (strain 86-028NP), this protein is Thiamine import ATP-binding protein ThiQ.